Reading from the N-terminus, the 491-residue chain is Glutamyl-tRNA(Gln) amidotransferase subunit A (491 aa).

Residues Lys79 and Ser154 each act as charge relay system in the active site. Ser178 serves as the catalytic Acyl-ester intermediate.

The protein belongs to the amidase family. GatA subfamily. In terms of assembly, heterotrimer of A, B and C subunits.

The enzyme catalyses L-glutamyl-tRNA(Gln) + L-glutamine + ATP + H2O = L-glutaminyl-tRNA(Gln) + L-glutamate + ADP + phosphate + H(+). Functionally, allows the formation of correctly charged Gln-tRNA(Gln) through the transamidation of misacylated Glu-tRNA(Gln) in organisms which lack glutaminyl-tRNA synthetase. The reaction takes place in the presence of glutamine and ATP through an activated gamma-phospho-Glu-tRNA(Gln). In Synechococcus sp. (strain CC9902), this protein is Glutamyl-tRNA(Gln) amidotransferase subunit A.